The primary structure comprises 406 residues: Ascaroside receptor GPR2 (406 aa).

Residues 1 to 29 (MTQLPYLLDRRGGALAAPATAWGDMMLNR) lie on the Extracellular side of the membrane. The chain crosses the membrane as a helical span at residues 30-50 (ALFSVALLSSVGSAWVVLSYA). Over 51 to 61 (CIKELRSYRHQ) the chain is Cytoplasmic. A helical transmembrane segment spans residues 62-82 (LILGLAISDLLMSLNFMFSAG). The Extracellular segment spans residues 83–107 (WNVAGGDLALEESRTACSVNGFLTQ). Cysteine 99 and cysteine 173 are joined by a disulfide. A helical membrane pass occupies residues 108–128 (VFVVQTDWWILVIAIATYIIL). Residues 129 to 143 (GNFKTQSQFIQTHVW) lie on the Cytoplasmic side of the membrane. The chain crosses the membrane as a helical span at residues 144 to 164 (IPWVGPWVLSIIIAAICHGVL). Over 165 to 185 (GYGYIGGWCWLTSDLMRLLIN) the chain is Extracellular. The chain crosses the membrane as a helical span at residues 186-206 (FIPRWLIVIAIALIYIRLYMI). Topologically, residues 207–326 (VRKARKWDIE…AAQLKRIAKK (120 aa)) are cytoplasmic. A helical transmembrane segment spans residues 327 to 347 (MMVYPVAYAIIWACPTAIRIY). Residues 348–356 (QGTTGSRAP) are Extracellular-facing. A helical transmembrane segment spans residues 357–377 (LWITIVDKSCIVIQGLVDAVV). Topologically, residues 378–406 (YGLNERAWQGWRDHIRRIIYKNEGGRIIG) are cytoplasmic.

The protein belongs to the G-protein coupled receptor 1 family. In terms of assembly, interacts with ascaroside receptor GPR3; may form a functional heterodimer. Interacts with guanine nucleotide-binding protein alpha GPA2; to activate adenylate cyclase and positively regulate nematode trap formation.

It is found in the cell membrane. Its function is as follows. G protein-coupled receptor that senses nematode ascaroside pheromones and signals via adenylate cyclase to positively regulate trap formation for nematode capture. The protein is Ascaroside receptor GPR2 of Arthrobotrys oligospora (strain ATCC 24927 / CBS 115.81 / DSM 1491) (Nematode-trapping fungus).